We begin with the raw amino-acid sequence, 434 residues long: MSVIKSIKAREILNSRGNPTVEVDLYTEKDGVVSSFRAAVPSGASTGIYEAVELRDGDKSRYLGKGVLKAIKNILEVIQPAVIGKSVSDQAAIDKLMIDLDGTPNKGKLGANAILAVSLAVCRAGAADRNLPLYKYISEIAGTKMRLPVPAFNVINGGSHAGNKLAMQEFMILPVGAKDFNEAYRMGSEVYHNLKNVISGRYGQDAINVGDEGGFAPPIQSNKEGLELLKLAIEKAGYTGLVKIGMDCAASEFKVENGYDLDFKTKNNDGSAVISGEKLGDLYREFIKEYPIISIEDPFDQDDWESYTKLTASVDIQIVGDDLLVTNPERIKTGIEKKACNALLLKVNQIGSVTESIRAALDSKNASWGVMVSHRSGETEDTFIADLVVGLGTGQIKTGAPCRSERLAKYNQLVRINEELGENHNYAGLTFRKF.

Substrate-binding residues include H160 and E169. E212 functions as the Proton donor in the catalytic mechanism. D247, E296, and D321 together coordinate Mg(2+). E296 and D321 together coordinate substrate. Catalysis depends on K346, which acts as the Proton acceptor. Substrate-binding positions include 373–376 and K397; that span reads SHRS.

The protein belongs to the enolase family. Homodimer. Requires Mg(2+) as cofactor.

The protein resides in the cytoplasm. It catalyses the reaction (2R)-2-phosphoglycerate = phosphoenolpyruvate + H2O. It functions in the pathway carbohydrate degradation; glycolysis; pyruvate from D-glyceraldehyde 3-phosphate: step 4/5. This Dictyostelium discoideum (Social amoeba) protein is Enolase A (enoA).